A 229-amino-acid chain; its full sequence is Transcriptional regulatory protein YxdJ (229 aa).

The Response regulatory domain maps to 3–116 (KIMIVEDSED…IVLAKIKSQI (114 aa)). Position 52 is a 4-aspartylphosphate (Asp52). The ompR/PhoB-type DNA-binding region spans 129-227 (EKVVEYAGVQ…VRGEGYQLRA (99 aa)).

Post-translationally, phosphorylated by YxdK.

It is found in the cytoplasm. Its function is as follows. Probable member of the two-component regulatory system YxdK/YxdJ. Positively regulates the expression of the yxdLMyxeA operon by direct interaction with its promoter region. Could also indirectly regulate the expression of the dlt operon. In Bacillus subtilis (strain 168), this protein is Transcriptional regulatory protein YxdJ (yxdJ).